The sequence spans 123 residues: Large ribosomal subunit protein bL12 (123 aa).

It belongs to the bacterial ribosomal protein bL12 family. Homodimer. Part of the ribosomal stalk of the 50S ribosomal subunit. Forms a multimeric L10(L12)X complex, where L10 forms an elongated spine to which 2 to 4 L12 dimers bind in a sequential fashion. Binds GTP-bound translation factors.

Forms part of the ribosomal stalk which helps the ribosome interact with GTP-bound translation factors. Is thus essential for accurate translation. The protein is Large ribosomal subunit protein bL12 of Albidiferax ferrireducens (strain ATCC BAA-621 / DSM 15236 / T118) (Rhodoferax ferrireducens).